Consider the following 169-residue polypeptide: Crossover junction endodeoxyribonuclease RuvC (169 aa).

Active-site residues include Asp13, Glu73, and Asp145. Asp13, Glu73, and Asp145 together coordinate Mg(2+).

This sequence belongs to the RuvC family. Homodimer which binds Holliday junction (HJ) DNA. The HJ becomes 2-fold symmetrical on binding to RuvC with unstacked arms; it has a different conformation from HJ DNA in complex with RuvA. In the full resolvosome a probable DNA-RuvA(4)-RuvB(12)-RuvC(2) complex forms which resolves the HJ. The cofactor is Mg(2+).

The protein localises to the cytoplasm. It catalyses the reaction Endonucleolytic cleavage at a junction such as a reciprocal single-stranded crossover between two homologous DNA duplexes (Holliday junction).. The RuvA-RuvB-RuvC complex processes Holliday junction (HJ) DNA during genetic recombination and DNA repair. Endonuclease that resolves HJ intermediates. Cleaves cruciform DNA by making single-stranded nicks across the HJ at symmetrical positions within the homologous arms, yielding a 5'-phosphate and a 3'-hydroxyl group; requires a central core of homology in the junction. The consensus cleavage sequence is 5'-(A/T)TT(C/G)-3'. Cleavage occurs on the 3'-side of the TT dinucleotide at the point of strand exchange. HJ branch migration catalyzed by RuvA-RuvB allows RuvC to scan DNA until it finds its consensus sequence, where it cleaves and resolves the cruciform DNA. The sequence is that of Crossover junction endodeoxyribonuclease RuvC from Solidesulfovibrio magneticus (strain ATCC 700980 / DSM 13731 / RS-1) (Desulfovibrio magneticus).